A 297-amino-acid polypeptide reads, in one-letter code: MTSSTSQITGSIVALVTPMLDDGSVDYPALRKLIDWHIAEGTDCIGVVGTTGESPTVNVQEHCEIIRVAVEQAAGRVPIMAGCGANCTAEAIELTQFAKKVGADCQLQVVPYYNKPTQEGQYRHFKAIAEAVDLPMVLYNVPGRAVADMAHDTVLRLAQVPGIVGIKEATGQIDRAQWLIREAPKGFAIYSGDDPTAVALMLCGGHGNVSVTANIAPRLMHELCVAAMAGDTKRAMEIQFKLLPLHKNLFIEANPIPVKWAVARLKLCGGTLRLPMTPLTPANEAALESALHASGLL.

Residue Thr51 participates in pyruvate binding. Tyr139 (proton donor/acceptor) is an active-site residue. Lys167 functions as the Schiff-base intermediate with substrate in the catalytic mechanism. Val209 serves as a coordination point for pyruvate.

It belongs to the DapA family. In terms of assembly, homotetramer; dimer of dimers.

It localises to the cytoplasm. It carries out the reaction L-aspartate 4-semialdehyde + pyruvate = (2S,4S)-4-hydroxy-2,3,4,5-tetrahydrodipicolinate + H2O + H(+). It functions in the pathway amino-acid biosynthesis; L-lysine biosynthesis via DAP pathway; (S)-tetrahydrodipicolinate from L-aspartate: step 3/4. Functionally, catalyzes the condensation of (S)-aspartate-beta-semialdehyde [(S)-ASA] and pyruvate to 4-hydroxy-tetrahydrodipicolinate (HTPA). The chain is 4-hydroxy-tetrahydrodipicolinate synthase from Albidiferax ferrireducens (strain ATCC BAA-621 / DSM 15236 / T118) (Rhodoferax ferrireducens).